We begin with the raw amino-acid sequence, 287 residues long: MAGAKEIRSKIASVQNTQKITKAMEMVAASKMRKSQDRMASSRPYADTMRKVIGHLANGNLEYKHPYLEERDVKRVGYLVVSTDRGLCGGLNINLFKKLLADMKVWSDKGVQSDIAMIGSKGVSFFNSVGGNIVAQVTGMGDNPSLSELIGPVKVMLQAYDEGRLDRLYVVSNKFINTMSQVPTLTQLLPLPASEDQELKQKAWDYLYEPDPKPLLDTLLRRYVESQVYQGVVENLASEQAARMVAMKAATDNGGSLIKELQLVYNKARQASITQELTEIVGGASAV.

The protein belongs to the ATPase gamma chain family. As to quaternary structure, F-type ATPases have 2 components, CF(1) - the catalytic core - and CF(0) - the membrane proton channel. CF(1) has five subunits: alpha(3), beta(3), gamma(1), delta(1), epsilon(1). CF(0) has three main subunits: a, b and c.

The protein localises to the cell inner membrane. Produces ATP from ADP in the presence of a proton gradient across the membrane. The gamma chain is believed to be important in regulating ATPase activity and the flow of protons through the CF(0) complex. The polypeptide is ATP synthase gamma chain (Enterobacter sp. (strain 638)).